The chain runs to 3184 residues: WD repeat- and FYVE domain-containing protein 4 (3184 aa).

The segment covering 1–18 (MEAEDLSKAEDRNEDPGS) has biased composition (basic and acidic residues). Disordered stretches follow at residues 1–39 (MEAEDLSKAEDRNEDPGSKNEGQLAAVQPDVPHGGQSSS), 944–993 (SHTH…QDST), 1837–1869 (VGAESTRNTSSPEAAAEGDSTVEGLQAPTKAHP), and 2309–2335 (ALSSGRHKESQDKNDHISQTNAENQDE). Polar residues predominate over residues 981–993 (QAPQPLGESQDST). Positions 2314 to 2324 (RHKESQDKNDH) are enriched in basic and acidic residues. The 126-residue stretch at 2385–2510 (LDKEKVTQKF…DRSKAFKSFC (126 aa)) folds into the BEACH-type PH domain. A BEACH domain is found at 2527–2821 (SLRRYPGSDR…QLFTKPHPAR (295 aa)). 6 WD repeats span residues 2863–2922 (MYLF…YGSD), 2923–2972 (KVLM…PRGL), 2973–3014 (RLRQ…LDHL), 3015–3057 (THVT…GQPL), 3058–3141 (ASIT…ELDV), and 3142–3184 (SIAL…SADG). The interval 3107–3128 (SVPGRPAGEEPPAQPPSPRGHK) is disordered.

Interacts with HSP90AB1.

Its subcellular location is the early endosome. It localises to the endoplasmic reticulum. Its function is as follows. Plays a critical role in the regulation of cDC1-mediated cross-presentation of viral and tumor antigens in dendritic cells. Mechanistically, acts near the plasma membrane and interacts with endosomal membranes to promote endosomal-to-cytosol antigen trafficking. Also plays a role in B-cell survival through regulation of autophagy. The protein is WD repeat- and FYVE domain-containing protein 4 (WDFY4) of Homo sapiens (Human).